A 299-amino-acid chain; its full sequence is Protease HtpX homolog (299 aa).

A run of 2 helical transmembrane segments spans residues 15 to 35 (ILLL…GYLF) and 39 to 59 (GLGG…SMIF). Position 143 (His143) interacts with Zn(2+). The active site involves Glu144. His147 lines the Zn(2+) pocket. Transmembrane regions (helical) follow at residues 158-178 (IAVA…RMMW) and 198-218 (IIML…ATLV). Glu227 is a Zn(2+) binding site.

Belongs to the peptidase M48B family. Zn(2+) is required as a cofactor.

The protein resides in the cell membrane. This Streptococcus pneumoniae serotype 4 (strain ATCC BAA-334 / TIGR4) protein is Protease HtpX homolog.